Here is a 156-residue protein sequence, read N- to C-terminus: Cyclin-dependent kinase inhibitor 2A (156 aa).

M1 is subject to N-acetylmethionine. Phosphoserine occurs at positions 7 and 8. 4 ANK repeats span residues P11–A40, Y44–C72, T77–V106, and W110–G139. 2 positions are modified to phosphoserine: S140 and S152.

It belongs to the CDKN2 cyclin-dependent kinase inhibitor family. Heterodimer with CDK4 or CDK6. Predominant p16 complexes contained CDK6. Interacts with CDK4 (both 'T-172'-phosphorylated and non-phosphorylated forms); the interaction inhibits cyclin D-CDK4 kinase activity. Interacts with ISCO2. Post-translationally, phosphorylation seems to increase interaction with CDK4. Widely expressed but not detected in brain or skeletal muscle. Isoform 3 is pancreas-specific.

Its subcellular location is the cytoplasm. It is found in the nucleus. Acts as a negative regulator of the proliferation of normal cells by interacting strongly with CDK4 and CDK6. This inhibits their ability to interact with cyclins D and to phosphorylate the retinoblastoma protein. This chain is Cyclin-dependent kinase inhibitor 2A, found in Homo sapiens (Human).